The chain runs to 180 residues: Isopentenyl-diphosphate Delta-isomerase (180 aa).

Positions 22 and 28 each coordinate Mn(2+). The Nudix hydrolase domain maps to 26–160 (LKHKAVSVFA…PERFTPWLKI (135 aa)). The active site involves Cys62. Residue Cys62 participates in Mg(2+) binding. His64 contributes to the Mn(2+) binding site. Glu82 contributes to the Mg(2+) binding site. Positions 108 and 110 each coordinate Mn(2+). Glu110 is a catalytic residue.

It belongs to the IPP isomerase type 1 family. Mg(2+) is required as a cofactor. Requires Mn(2+) as cofactor.

The protein resides in the cytoplasm. It carries out the reaction isopentenyl diphosphate = dimethylallyl diphosphate. It functions in the pathway isoprenoid biosynthesis; dimethylallyl diphosphate biosynthesis; dimethylallyl diphosphate from isopentenyl diphosphate: step 1/1. In terms of biological role, catalyzes the 1,3-allylic rearrangement of the homoallylic substrate isopentenyl (IPP) to its highly electrophilic allylic isomer, dimethylallyl diphosphate (DMAPP). This chain is Isopentenyl-diphosphate Delta-isomerase, found in Ruegeria pomeroyi (strain ATCC 700808 / DSM 15171 / DSS-3) (Silicibacter pomeroyi).